We begin with the raw amino-acid sequence, 507 residues long: Nucleoporin p54 (507 aa).

9 repeat units span residues 5-6 (FG), 25-26 (FG), 28-29 (FG), 53-54 (FG), 61-62 (FG), 63-64 (FG), 67-68 (FG), 87-88 (FG), and 444-445 (FG). Residues 5–445 (FGAPSGTSGT…SQIRMQNHFG (441 aa)) are 9 X 2 AA repeats of F-G.

This sequence belongs to the NUP54 family. In terms of assembly, component of the p62 complex, a complex composed of NUP62, NUP54, and the isoform p58 and isoform p45 of NUP58. Interacts with NUTF2. Post-translationally, O-glycosylated.

The protein localises to the nucleus. It is found in the nuclear pore complex. Its subcellular location is the nucleus membrane. Its function is as follows. Component of the nuclear pore complex, a complex required for the trafficking across the nuclear membrane. The sequence is that of Nucleoporin p54 (NUP54) from Homo sapiens (Human).